Here is a 277-residue protein sequence, read N- to C-terminus: NLP effector protein Pc109174 (277 aa).

An N-terminal signal peptide occupies residues 1–19; the sequence is MNLVPALVLLLALAQTVLG. Residues 119 to 125 carry the Hepta-peptide GHRHDWE motif motif; it reads KSRHLWA. Asparagine 199 carries an N-linked (GlcNAc...) asparagine glycan.

The protein belongs to the Necrosis inducing protein (NPP1) family.

It is found in the secreted. Secreted effector that contributes strongly to virulence during infection by P.capsici. Induces cell death in the Solanaceae, including hot pepper. The sequence is that of NLP effector protein Pc109174 from Phytophthora capsici.